We begin with the raw amino-acid sequence, 71 residues long: DNA-directed RNA polymerase subunit epsilon (71 aa).

The protein belongs to the RNA polymerase subunit epsilon family. RNAP is composed of a core of 2 alpha, a beta and a beta' subunit. The core is associated with a delta subunit, and at least one of epsilon or omega. When a sigma factor is associated with the core the holoenzyme is formed, which can initiate transcription.

The catalysed reaction is RNA(n) + a ribonucleoside 5'-triphosphate = RNA(n+1) + diphosphate. Functionally, a non-essential component of RNA polymerase (RNAP). In Geobacillus kaustophilus (strain HTA426), this protein is DNA-directed RNA polymerase subunit epsilon.